The primary structure comprises 533 residues: NEDD8-activating enzyme E1 regulatory subunit (533 aa).

Residues D330–N343 form an interaction with uba3 region.

Belongs to the ubiquitin-activating E1 family. ULA1 subfamily. Heterodimer of uba3 and nae1. The complex binds nedd8 and ube2m.

It participates in protein modification; protein neddylation. Its function is as follows. Regulatory subunit of the dimeric uba3-nae1 E1 enzyme. E1 activates nedd8 by first adenylating its C-terminal glycine residue with ATP, thereafter linking this residue to the side chain of the catalytic cysteine, yielding a nedd8-uba3 thioester and free AMP. E1 finally transfers nedd8 to the catalytic cysteine of ube2m. The covalent attachment of nedd8 to target proteins is known as 'neddylation' and the process is involved in the regulation of cell growth, viability and development. This is NEDD8-activating enzyme E1 regulatory subunit (nae1) from Danio rerio (Zebrafish).